We begin with the raw amino-acid sequence, 199 residues long: Protein GrpE (199 aa).

This sequence belongs to the GrpE family. In terms of assembly, homodimer.

It localises to the cytoplasm. Its function is as follows. Participates actively in the response to hyperosmotic and heat shock by preventing the aggregation of stress-denatured proteins, in association with DnaK and GrpE. It is the nucleotide exchange factor for DnaK and may function as a thermosensor. Unfolded proteins bind initially to DnaJ; upon interaction with the DnaJ-bound protein, DnaK hydrolyzes its bound ATP, resulting in the formation of a stable complex. GrpE releases ADP from DnaK; ATP binding to DnaK triggers the release of the substrate protein, thus completing the reaction cycle. Several rounds of ATP-dependent interactions between DnaJ, DnaK and GrpE are required for fully efficient folding. The chain is Protein GrpE from Fusobacterium nucleatum subsp. nucleatum (strain ATCC 25586 / DSM 15643 / BCRC 10681 / CIP 101130 / JCM 8532 / KCTC 2640 / LMG 13131 / VPI 4355).